The chain runs to 20 residues: Putative phosphoglycerate kinase (20 aa).

Belongs to the phosphoglycerate kinase family. As to quaternary structure, monomer.

The protein localises to the cytoplasm. It catalyses the reaction (2R)-3-phosphoglycerate + ATP = (2R)-3-phospho-glyceroyl phosphate + ADP. Its pathway is carbohydrate degradation; glycolysis; pyruvate from D-glyceraldehyde 3-phosphate: step 2/5. This is Putative phosphoglycerate kinase (pgk) from Clostridium pasteurianum.